The primary structure comprises 91 residues: Small ribosomal subunit protein uS19 (91 aa).

The protein belongs to the universal ribosomal protein uS19 family.

In terms of biological role, protein S19 forms a complex with S13 that binds strongly to the 16S ribosomal RNA. This Trichodesmium erythraeum (strain IMS101) protein is Small ribosomal subunit protein uS19.